We begin with the raw amino-acid sequence, 382 residues long: MFSVPFLTSLTSHLGITAIDDASDTLSCLITAFLFITAAILTSAKTYVGSAMECWLPQTYSGDWGEFAENYCFLKDTYFYPRQQSMTDIPMYHKERHRLTYYQWSSMYLAVAGIAFMIPKFLWRLSQSTTDMPVVYFCDTANEIKNETEDKRSAKIKEMARFMRTKITSVHTPSLFSFIRMYMVYSVIKILYLVNAIAQFVIIAIFLGQKRNLFWGWTLFMNLLNGITWETTGLFPRVTFCDFQVREMAGNNRDETVECVIGINEFNEKIFLFFWFWLVFLVFSTLIAHFYNAAQIVKPYFIHSLLFAIRDHDIVDQKELFREFGEKYLTMDGKLILSFVKSQSDLVASEVAVEMYSDFLEARDRANIAEDKYNNILKNGKQ.

The next 4 membrane-spanning stretches (helical) occupy residues 29–49 (LITAFLFITAAILTSAKTYVG), 103–123 (QWSSMYLAVAGIAFMIPKFLW), 187–207 (VIKILYLVNAIAQFVIIAIFL), and 270–290 (IFLFFWFWLVFLVFSTLIAHF).

This sequence belongs to the pannexin family.

It localises to the cell membrane. It is found in the cell junction. The protein localises to the gap junction. Its function is as follows. Structural component of the gap junctions. This chain is Innexin-8 (inx-8), found in Caenorhabditis elegans.